Reading from the N-terminus, the 208-residue chain is Uracil phosphoribosyltransferase (208 aa).

Residues R78, R103, and 130–138 each bind 5-phospho-alpha-D-ribose 1-diphosphate; that span reads DPMLATGGS. Uracil-binding positions include I193 and 198 to 200; that span reads GDA. Residue D199 participates in 5-phospho-alpha-D-ribose 1-diphosphate binding.

This sequence belongs to the UPRTase family. The cofactor is Mg(2+).

The catalysed reaction is UMP + diphosphate = 5-phospho-alpha-D-ribose 1-diphosphate + uracil. Its pathway is pyrimidine metabolism; UMP biosynthesis via salvage pathway; UMP from uracil: step 1/1. Its activity is regulated as follows. Allosterically activated by GTP. Its function is as follows. Catalyzes the conversion of uracil and 5-phospho-alpha-D-ribose 1-diphosphate (PRPP) to UMP and diphosphate. In Haemophilus influenzae (strain PittEE), this protein is Uracil phosphoribosyltransferase.